Consider the following 585-residue polypeptide: A-type ATP synthase subunit A (585 aa).

Residue glycine 231–threonine 238 coordinates ATP.

Belongs to the ATPase alpha/beta chains family. Has multiple subunits with at least A(3), B(3), C, D, E, F, H, I and proteolipid K(x).

It is found in the cell membrane. It carries out the reaction ATP + H2O + 4 H(+)(in) = ADP + phosphate + 5 H(+)(out). In terms of biological role, produces ATP from ADP in the presence of a proton gradient across the membrane. The archaeal alpha chain is a catalytic subunit. Functionally, component of the A-type ATP synthase that produces ATP from ADP in the presence of a proton gradient across the membrane. The A chain is the catalytic subunit. The protein is A-type ATP synthase subunit A of Thermococcus kodakarensis (strain ATCC BAA-918 / JCM 12380 / KOD1) (Pyrococcus kodakaraensis (strain KOD1)).